The chain runs to 154 residues: Deoxyuridine 5'-triphosphate nucleotidohydrolase (154 aa).

Substrate contacts are provided by residues 64-66 (RSG), Asn-77, 81-83 (TID), and Lys-91.

This sequence belongs to the dUTPase family. In terms of assembly, homotrimer. Requires Mg(2+) as cofactor.

The enzyme catalyses dUTP + H2O = dUMP + diphosphate + H(+). It participates in pyrimidine metabolism; dUMP biosynthesis; dUMP from dCTP (dUTP route): step 2/2. Functionally, this enzyme is involved in nucleotide metabolism: it produces dUMP, the immediate precursor of thymidine nucleotides and it decreases the intracellular concentration of dUTP so that uracil cannot be incorporated into DNA. This Mycobacterium sp. (strain JLS) protein is Deoxyuridine 5'-triphosphate nucleotidohydrolase.